The primary structure comprises 488 residues: Nitrogen metabolite repression protein nmr (488 aa).

The tract at residues 1–45 is disordered; the sequence is MPAEILSELPLRPAPRDIKIPNAMHNEERRHKHSRSSYSEMSPLM. The span at 14–29 shows a compositional bias: basic and acidic residues; sequence APRDIKIPNAMHNEER. Polar residues predominate over residues 36-45; the sequence is SSYSEMSPLM. Residues 71 to 76, asparagine 165, lysine 215, and 237 to 240 contribute to the NADP(+) site; these read NAAGRQ and YNNN. NAD(+)-binding positions include 75-76, 165-167, lysine 215, and 237-240; these read RQ, NTT, and YNNN. The dispensable for NMR function stretch occupies residues 412–488; the sequence is EEYDGGGGNN…NKRADEEWLA (77 aa). Residues 422–488 form a disordered region; the sequence is IGNNHNNHHQ…NKRADEEWLA (67 aa). Residues 438-459 are compositionally biased toward low complexity; sequence HQNGHQNGHNGINGHIVNGGVD. Over residues 460–473 the composition is skewed to acidic residues; that stretch reads SESEEEDSDSDDEG.

The protein belongs to the NmrA-type oxidoreductase family. In terms of assembly, interacts with nit-2.

The protein localises to the nucleus. In terms of biological role, may be a redox sensor protein. Negative transcriptional regulator involved in the post-transcriptional modulation of the GATA-type transcription factor nit-2, forming part of a system controlling nitrogen metabolite repression. In Neurospora crassa (strain ATCC 24698 / 74-OR23-1A / CBS 708.71 / DSM 1257 / FGSC 987), this protein is Nitrogen metabolite repression protein nmr (nmr).